Here is a 132-residue protein sequence, read N- to C-terminus: Small ribosomal subunit protein uS19 (132 aa).

It belongs to the universal ribosomal protein uS19 family. As to quaternary structure, part of the 30S ribosomal subunit.

Its function is as follows. Protein S19 forms a complex with S13 that binds strongly to the 16S ribosomal RNA. This Pyrococcus furiosus (strain ATCC 43587 / DSM 3638 / JCM 8422 / Vc1) protein is Small ribosomal subunit protein uS19.